The following is a 120-amino-acid chain: NAD(P)H-quinone oxidoreductase subunit 3, chloroplastic (120 aa).

Helical transmembrane passes span 9 to 29 (FFWA…FISG), 64 to 84 (MFAL…PWAM), and 88 to 108 (VLGV…IIGL).

The protein belongs to the complex I subunit 3 family. In terms of assembly, NDH is composed of at least 16 different subunits, 5 of which are encoded in the nucleus.

The protein localises to the plastid. It is found in the chloroplast thylakoid membrane. The catalysed reaction is a plastoquinone + NADH + (n+1) H(+)(in) = a plastoquinol + NAD(+) + n H(+)(out). It catalyses the reaction a plastoquinone + NADPH + (n+1) H(+)(in) = a plastoquinol + NADP(+) + n H(+)(out). NDH shuttles electrons from NAD(P)H:plastoquinone, via FMN and iron-sulfur (Fe-S) centers, to quinones in the photosynthetic chain and possibly in a chloroplast respiratory chain. The immediate electron acceptor for the enzyme in this species is believed to be plastoquinone. Couples the redox reaction to proton translocation, and thus conserves the redox energy in a proton gradient. The polypeptide is NAD(P)H-quinone oxidoreductase subunit 3, chloroplastic (Atropa belladonna (Belladonna)).